The primary structure comprises 288 residues: Inorganic pyrophosphatase (288 aa).

R80 provides a ligand contact to diphosphate. The Mg(2+) site is built by D117, D122, and D154. Residues 252 to 271 (TPSYSDAAAQEIPSASPAPA) form a disordered region. Positions 258–271 (AAAQEIPSASPAPA) are enriched in low complexity.

It belongs to the PPase family. Mg(2+) is required as a cofactor.

Its subcellular location is the cytoplasm. The catalysed reaction is diphosphate + H2O = 2 phosphate + H(+). This Candida albicans (strain SC5314 / ATCC MYA-2876) (Yeast) protein is Inorganic pyrophosphatase (IPP1).